The sequence spans 205 residues: Auxin-responsive protein IAA8 (205 aa).

The interval 1–48 (MECMASTEESLPASSSMDSCSGELPTTTTTAPAQSTASSGCRPPATAA) is disordered. Polar residues predominate over residues 7–19 (TEESLPASSSMDS). Positions 25 to 39 (PTTTTTAPAQSTASS) are enriched in low complexity. The EAR-like (transcriptional repression) motif lies at 58 to 62 (LRLGL). Residues 71 to 98 (DGNNPSTPRSSLTTATVTADRGGGGGGH) are disordered. The span at 73-87 (NNPSTPRSSLTTATV) shows a compositional bias: polar residues. Positions 103–199 (SLFVKVYMEG…KRLRIARADD (97 aa)) constitute a PB1 domain.

This sequence belongs to the Aux/IAA family. As to quaternary structure, homodimers and heterodimers. In terms of tissue distribution, highly expressed in green shoots. Expressed in flowers.

The protein resides in the nucleus. Functionally, aux/IAA proteins are short-lived transcriptional factors that function as repressors of early auxin response genes at low auxin concentrations. This is Auxin-responsive protein IAA8 (IAA8) from Oryza sativa subsp. japonica (Rice).